The following is a 288-amino-acid chain: N-acetylneuraminate lyase (288 aa).

Residues Ser-44 and Thr-45 each coordinate aceneuramate. Residue Tyr-133 is the Proton donor of the active site. The Schiff-base intermediate with substrate role is filled by Lys-161. Residues Thr-163, Gly-185, Asp-187, Glu-188, and Ser-204 each coordinate aceneuramate.

It belongs to the DapA family. NanA subfamily. Homotetramer.

The protein resides in the cytoplasm. It catalyses the reaction aceneuramate = aldehydo-N-acetyl-D-mannosamine + pyruvate. Its pathway is amino-sugar metabolism; N-acetylneuraminate degradation; D-fructose 6-phosphate from N-acetylneuraminate: step 1/5. Its function is as follows. Catalyzes the reversible aldol cleavage of N-acetylneuraminic acid (sialic acid; Neu5Ac) to form pyruvate and N-acetylmannosamine (ManNAc) via a Schiff base intermediate. The sequence is that of N-acetylneuraminate lyase from Clostridium perfringens (strain ATCC 13124 / DSM 756 / JCM 1290 / NCIMB 6125 / NCTC 8237 / Type A).